An 871-amino-acid chain; its full sequence is Translation initiation factor IF-2 (871 aa).

The interval 1-242 (MVDTKNPGDK…PAAKPAPAKQ (242 aa)) is disordered. The segment covering 68–91 (PASARTPAAKAPPARAATPAAPRA) has biased composition (low complexity). A compositionally biased stretch (basic and acidic residues) spans 115-174 (AKVRAEEERRIAEAEAARRNSKEGIEQAEREAAEARRKAEEERHRQEEEAKRKAEIEAKR). Low complexity-rich tracts occupy residues 182 to 206 (KPAP…AVAA) and 225 to 241 (ARPV…APAK). The tr-type G domain occupies 367–538 (PRSPVVTVMG…SLQADLLDLK (172 aa)). The segment at 376-383 (GHVDHGKT) is G1. 376 to 383 (GHVDHGKT) is a GTP binding site. The tract at residues 401 to 405 (GITQH) is G2. The segment at 424-427 (DTPG) is G3. GTP-binding positions include 424-428 (DTPGH) and 478-481 (NKID). Residues 478–481 (NKID) form a G4 region. The G5 stretch occupies residues 514–516 (SAK).

The protein belongs to the TRAFAC class translation factor GTPase superfamily. Classic translation factor GTPase family. IF-2 subfamily.

Its subcellular location is the cytoplasm. Functionally, one of the essential components for the initiation of protein synthesis. Protects formylmethionyl-tRNA from spontaneous hydrolysis and promotes its binding to the 30S ribosomal subunits. Also involved in the hydrolysis of GTP during the formation of the 70S ribosomal complex. This is Translation initiation factor IF-2 from Nitrobacter winogradskyi (strain ATCC 25391 / DSM 10237 / CIP 104748 / NCIMB 11846 / Nb-255).